Consider the following 1141-residue polypeptide: DNA-directed RNA polymerase subunit beta (1141 aa).

The protein belongs to the RNA polymerase beta chain family. As to quaternary structure, the RNAP catalytic core consists of 2 alpha, 1 beta, 1 beta' and 1 omega subunit. When a sigma factor is associated with the core the holoenzyme is formed, which can initiate transcription.

The enzyme catalyses RNA(n) + a ribonucleoside 5'-triphosphate = RNA(n+1) + diphosphate. DNA-dependent RNA polymerase catalyzes the transcription of DNA into RNA using the four ribonucleoside triphosphates as substrates. In Frankia alni (strain DSM 45986 / CECT 9034 / ACN14a), this protein is DNA-directed RNA polymerase subunit beta.